Reading from the N-terminus, the 215-residue chain is 3,4-dihydroxy-2-butanone 4-phosphate synthase (215 aa).

Residues 38–39 (RE), Asp-43, 151–155 (RRGHT), and Glu-175 each bind D-ribulose 5-phosphate. Glu-39 is a binding site for Mg(2+). His-154 contacts Mg(2+).

This sequence belongs to the DHBP synthase family. As to quaternary structure, homodimer. Mg(2+) is required as a cofactor. It depends on Mn(2+) as a cofactor.

It catalyses the reaction D-ribulose 5-phosphate = (2S)-2-hydroxy-3-oxobutyl phosphate + formate + H(+). It participates in cofactor biosynthesis; riboflavin biosynthesis; 2-hydroxy-3-oxobutyl phosphate from D-ribulose 5-phosphate: step 1/1. Functionally, catalyzes the conversion of D-ribulose 5-phosphate to formate and 3,4-dihydroxy-2-butanone 4-phosphate. The protein is 3,4-dihydroxy-2-butanone 4-phosphate synthase of Haemophilus influenzae (strain 86-028NP).